The sequence spans 90 residues: DNA-binding protein HU-alpha (90 aa).

Belongs to the bacterial histone-like protein family. As to quaternary structure, heterodimer of an alpha and a beta chain.

In terms of biological role, histone-like DNA-binding protein which is capable of wrapping DNA to stabilize it, and thus to prevent its denaturation under extreme environmental conditions. The protein is DNA-binding protein HU-alpha (hupA) of Vibrio proteolyticus (Aeromonas proteolytica).